A 280-amino-acid polypeptide reads, in one-letter code: Truncated lectin 2 (280 aa).

Positions 1–26 (MSSSNFSCILSISLTFFILLLNKVNS) are cleaved as a signal peptide. 2 residues coordinate Mn(2+): glutamate 148 and aspartate 150. Positions 150, 152, 154, and 158 each coordinate Ca(2+). Aspartate 158 contributes to the Mn(2+) binding site. Asparagine 163 carries N-linked (GlcNAc...) asparagine glycosylation. Histidine 170 contacts Mn(2+). The N-linked (GlcNAc...) asparagine glycan is linked to asparagine 272.

This sequence belongs to the leguminous lectin family.

The chain is Truncated lectin 2 (LEC2) from Medicago truncatula (Barrel medic).